We begin with the raw amino-acid sequence, 288 residues long: Polyisoprenoid diphosphate/phosphate phosphohydrolase PLPP6 (288 aa).

The segment at 1-82 (MPSPKARSGS…STGGGGQQLP (82 aa)) is disordered. The Cytoplasmic portion of the chain corresponds to 1–127 (MPSPKARSGS…EDSSWGSVRP (127 aa)). The chain crosses the membrane as a helical span at residues 128–148 (LMKLIEVSGHGIPWLAGAAYC). Over 149–161 (LYKSDSPAGQEVM) the chain is Lumenal. A helical transmembrane segment spans residues 162 to 182 (LNLLMALVLDVVLVGVLKAVV). The phosphatase sequence motif I stretch occupies residues 179–187 (KAVVRRRRP). The Cytoplasmic segment spans residues 183–223 (RRRRPAHNRMDMFATFSVDSYSFPSGHATRAAMCARFLLNH). The tract at residues 206 to 209 (PSGH) is phosphatase sequence motif II. His-209 serves as the catalytic Proton donors. Residues 224–244 (LVLAAPLRVLVLLWATIVGFS) traverse the membrane as a helical segment. Residues 244-255 (SRVLLGRHNVTD) form a phosphatase sequence motif III region. At 245–255 (RVLLGRHNVTD) the chain is on the lumenal side. The active-site Nucleophile is the His-251. The helical transmembrane segment at 256–276 (VAFGFFMGYWQYNLVEMLWLS) threads the bilayer. The Cytoplasmic segment spans residues 277 to 288 (PVMLQSAIGQLH).

It belongs to the PA-phosphatase related phosphoesterase family.

Its subcellular location is the endoplasmic reticulum membrane. The protein resides in the nucleus envelope. It localises to the nucleus inner membrane. The enzyme catalyses presqualene diphosphate + H2O = presqualene phosphate + phosphate + H(+). It catalyses the reaction presqualene phosphate + H2O = presqualene alcohol + phosphate. The catalysed reaction is (2E,6E)-farnesyl diphosphate + H2O = (2E,6E)-farnesyl phosphate + phosphate + H(+). It carries out the reaction (2E,6E)-farnesyl phosphate + H2O = (2E,6E)-farnesol + phosphate. The enzyme catalyses (2E,6E,10E)-geranylgeranyl diphosphate + H2O = (2E,6E,10E)-geranylgeranyl phosphate + phosphate + H(+). It catalyses the reaction (2E,6E,10E)-geranylgeranyl phosphate + H2O = (2E,6E,10E)-geranylgeraniol + phosphate. The catalysed reaction is (2E)-geranyl diphosphate + H2O = (2E)-geranyl phosphate + phosphate + H(+). It carries out the reaction (2E)-geranyl phosphate + H2O = (2E)-geraniol + phosphate. The enzyme catalyses 1,2-dihexadecanoyl-sn-glycero-3-phosphate + H2O = 1,2-dihexadecanoyl-sn-glycerol + phosphate. Magnesium-independent polyisoprenoid diphosphatase that catalyzes the sequential dephosphorylation of presqualene, farnesyl, geranyl and geranylgeranyl diphosphates. May regulate the biosynthesis of cholesterol and related sterols by dephosphorylating presqualene and farnesyl diphosphate, two key intermediates in this biosynthetic pathway. May also play a role in protein prenylation by acting on farnesyl diphosphate and its derivative geranylgeranyl diphosphate, two precursors for the addition of isoprenoid anchors to membrane proteins. Has a lower activity towards phosphatidic acid (PA), but through phosphatidic acid dephosphorylation may participate in the biosynthesis of phospholipids and triacylglycerols. May also act on ceramide-1-P, lysophosphatidic acid (LPA) and sphing-4-enine 1-phosphate/sphingosine-1-phosphate. This is Polyisoprenoid diphosphate/phosphate phosphohydrolase PLPP6 (plpp6) from Danio rerio (Zebrafish).